We begin with the raw amino-acid sequence, 247 residues long: Adenosylcobinamide-GDP ribazoletransferase (247 aa).

6 helical membrane passes run 31-51 (ILFY…VTCI), 55-75 (LPAL…TGGL), 109-129 (IGVL…YVLI), 135-155 (LFLI…FLTT), 183-203 (VLLL…SFLI), and 227-247 (AIEI…FYLV).

The protein belongs to the CobS family. Mg(2+) serves as cofactor.

The protein resides in the cell inner membrane. It catalyses the reaction alpha-ribazole + adenosylcob(III)inamide-GDP = adenosylcob(III)alamin + GMP + H(+). The enzyme catalyses alpha-ribazole 5'-phosphate + adenosylcob(III)inamide-GDP = adenosylcob(III)alamin 5'-phosphate + GMP + H(+). It functions in the pathway cofactor biosynthesis; adenosylcobalamin biosynthesis; adenosylcobalamin from cob(II)yrinate a,c-diamide: step 7/7. Joins adenosylcobinamide-GDP and alpha-ribazole to generate adenosylcobalamin (Ado-cobalamin). Also synthesizes adenosylcobalamin 5'-phosphate from adenosylcobinamide-GDP and alpha-ribazole 5'-phosphate. This Acinetobacter baumannii (strain ACICU) protein is Adenosylcobinamide-GDP ribazoletransferase.